Reading from the N-terminus, the 215-residue chain is Cytochrome b6 (215 aa).

A helical membrane pass occupies residues 32 to 52 (IFYCLGGITLTCFLVQVATGF). Position 35 (Cys35) interacts with heme c. Heme b contacts are provided by His86 and His100. A run of 3 helical transmembrane segments spans residues 90–110 (ASMM…TGGF), 116–136 (LTWV…VTGY), and 186–206 (LHTF…FPMI). His187 and His202 together coordinate heme b.

This sequence belongs to the cytochrome b family. PetB subfamily. In terms of assembly, the 4 large subunits of the cytochrome b6-f complex are cytochrome b6, subunit IV (17 kDa polypeptide, PetD), cytochrome f and the Rieske protein, while the 4 small subunits are PetG, PetL, PetM and PetN. The complex functions as a dimer. It depends on heme b as a cofactor. Requires heme c as cofactor.

Its subcellular location is the plastid. It localises to the chloroplast thylakoid membrane. Its function is as follows. Component of the cytochrome b6-f complex, which mediates electron transfer between photosystem II (PSII) and photosystem I (PSI), cyclic electron flow around PSI, and state transitions. In Jasminum nudiflorum (Winter jasmine), this protein is Cytochrome b6.